Here is a 425-residue protein sequence, read N- to C-terminus: Putative TRAP transporter large permease protein HI_1029 (425 aa).

13 consecutive transmembrane segments (helical) span residues 3 to 23 (VIIF…VAFA), 24 to 44 (LLIC…QILA), 54 to 74 (FSLM…EGGL), 93 to 113 (LGFV…SAVA), 139 to 159 (LIGT…FIVF), 169 to 189 (KLFL…AILW), 217 to 237 (VWAL…IFTP), 241 to 261 (GVVA…ELPL), 275 to 295 (TAVV…ITVA), 312 to 332 (PTIL…VMDL), 334 to 354 (PTVL…GIDP), 355 to 375 (VYFG…PPVG), and 399 to 419 (YLGM…LILM).

It belongs to the TRAP transporter large permease family.

It is found in the cell inner membrane. The protein is Putative TRAP transporter large permease protein HI_1029 of Haemophilus influenzae (strain ATCC 51907 / DSM 11121 / KW20 / Rd).